Reading from the N-terminus, the 348-residue chain is GTPase Obg (348 aa).

Residues 1-159 (MKFLDQARIY…MTLWLRLKLI (159 aa)) form the Obg domain. One can recognise an OBG-type G domain in the interval 160 to 327 (ADAGLVGLPN…TLQSLLAAID (168 aa)). GTP is bound by residues 166-173 (GLPNAGKS), 191-195 (FTTLH), 212-215 (DIPG), 279-282 (SKID), and 308-310 (SAA). Serine 173 and threonine 193 together coordinate Mg(2+).

This sequence belongs to the TRAFAC class OBG-HflX-like GTPase superfamily. OBG GTPase family. In terms of assembly, monomer. Mg(2+) serves as cofactor.

It localises to the cytoplasm. Functionally, an essential GTPase which binds GTP, GDP and possibly (p)ppGpp with moderate affinity, with high nucleotide exchange rates and a fairly low GTP hydrolysis rate. Plays a role in control of the cell cycle, stress response, ribosome biogenesis and in those bacteria that undergo differentiation, in morphogenesis control. This Beijerinckia indica subsp. indica (strain ATCC 9039 / DSM 1715 / NCIMB 8712) protein is GTPase Obg.